Reading from the N-terminus, the 429-residue chain is C4-dicarboxylate transport protein (429 aa).

8 consecutive transmembrane segments (helical) span residues 9 to 29 (VLYVQVIFAIIVGVILGHYYP), 45 to 65 (LIKMVIGPIIFCTVVTGIAGM), 79 to 99 (LLYFEIVSTFALLLGLAATHI), 149 to 169 (GEILQILLIALLFGSVLAHLG), 185 to 205 (VLFGIVHIVTKLAPIGAFGAM), 223 to 243 (LIGTFYLTSVVFVLVVLGTIA), 308 to 328 (IYMTMAVLFIAQATNIELTWM), and 356 to 376 (AATLAVVPTIPLSGMVLILGI).

The protein belongs to the dicarboxylate/amino acid:cation symporter (DAACS) (TC 2.A.23) family.

It localises to the cell inner membrane. Functionally, responsible for the transport of dicarboxylates such as succinate, fumarate, and malate from the periplasm across the membrane. The chain is C4-dicarboxylate transport protein from Burkholderia lata (strain ATCC 17760 / DSM 23089 / LMG 22485 / NCIMB 9086 / R18194 / 383).